We begin with the raw amino-acid sequence, 232 residues long: Orotidine 5'-phosphate decarboxylase (232 aa).

Residues Asp-13, Lys-35, 62 to 71 (DLKFHDIPNT), Thr-122, Arg-182, Gln-191, Gly-211, and Arg-212 contribute to the substrate site. Residue Lys-64 is the Proton donor of the active site.

Belongs to the OMP decarboxylase family. Type 1 subfamily. In terms of assembly, homodimer.

The enzyme catalyses orotidine 5'-phosphate + H(+) = UMP + CO2. The protein operates within pyrimidine metabolism; UMP biosynthesis via de novo pathway; UMP from orotate: step 2/2. Its function is as follows. Catalyzes the decarboxylation of orotidine 5'-monophosphate (OMP) to uridine 5'-monophosphate (UMP). The chain is Orotidine 5'-phosphate decarboxylase from Pseudomonas fluorescens (strain SBW25).